The chain runs to 371 residues: D-erythrose-4-phosphate dehydrogenase (371 aa).

R12–I13 serves as a coordination point for NAD(+). Residues S154–T156, R200, T213–K214, and R236 each bind substrate. The Nucleophile role is filled by C155. N318 is an NAD(+) binding site.

It belongs to the glyceraldehyde-3-phosphate dehydrogenase family. Epd subfamily. In terms of assembly, homotetramer.

The protein resides in the cytoplasm. It carries out the reaction D-erythrose 4-phosphate + NAD(+) + H2O = 4-phospho-D-erythronate + NADH + 2 H(+). Its pathway is cofactor biosynthesis; pyridoxine 5'-phosphate biosynthesis; pyridoxine 5'-phosphate from D-erythrose 4-phosphate: step 1/5. Functionally, catalyzes the NAD-dependent conversion of D-erythrose 4-phosphate to 4-phosphoerythronate. This chain is D-erythrose-4-phosphate dehydrogenase, found in Psychromonas ingrahamii (strain DSM 17664 / CCUG 51855 / 37).